A 38-amino-acid chain; its full sequence is Toxin CSTX-16 (38 aa).

A glutamine amide mark is found at glutamine 19 and glutamine 38.

This sequence belongs to the cationic peptide 04 (cupiennin) family. 10 (double chain) subfamily. Expressed by the venom gland.

The protein localises to the secreted. The chain is Toxin CSTX-16 from Cupiennius salei (American wandering spider).